A 304-amino-acid polypeptide reads, in one-letter code: tRNA pseudouridine synthase B (304 aa).

The active-site Nucleophile is D41.

The protein belongs to the pseudouridine synthase TruB family. Type 1 subfamily.

The enzyme catalyses uridine(55) in tRNA = pseudouridine(55) in tRNA. In terms of biological role, responsible for synthesis of pseudouridine from uracil-55 in the psi GC loop of transfer RNAs. The protein is tRNA pseudouridine synthase B of Nitratidesulfovibrio vulgaris (strain ATCC 29579 / DSM 644 / CCUG 34227 / NCIMB 8303 / VKM B-1760 / Hildenborough) (Desulfovibrio vulgaris).